The primary structure comprises 764 residues: G-type lectin S-receptor-like serine/threonine-protein kinase SD3-1 (764 aa).

Residues 1–24 (MKMLRALLLCLSLVFFLAFQIVVS) form the signal peptide. 2 consecutive Bulb-type lectin domains span residues 25-151 (EIQL…QSFG) and 154-279 (TDTL…WKPV). Topologically, residues 25-442 (EIQLGSKLVV…TKSHSICIPC (418 aa)) are extracellular. N-linked (GlcNAc...) asparagine glycans are attached at residues Asn92, Asn198, and Asn248. The EGF-like; atypical domain maps to 283–320 (VENQCRVFATCGSQVCSFNSSGYTECNCPFNAFVSVSD). Disulfide bonds link Cys287/Cys298, Cys293/Cys308, Cys332/Cys413, Cys365/Cys388, and Cys369/Cys375. 2 N-linked (GlcNAc...) asparagine glycosylation sites follow: Asn301 and Asn353. In terms of domain architecture, Apple spans 332–413 (CKSGFNMVKF…LSSISYVKTC (82 aa)). A glycan (N-linked (GlcNAc...) asparagine) is linked at Asn423. A helical membrane pass occupies residues 443 to 463 (LVGATSTTLVLFLGFQLGIVV). The Cytoplasmic portion of the chain corresponds to 464-764 (YIYRRKKKLA…SESSQSLYEP (301 aa)). One can recognise a Protein kinase domain in the interval 466-764 (YRRKKKLAKK…SESSQSLYEP (299 aa)). ATP-binding positions include 508 to 516 (IGPQIFKGV) and Lys526. Residues 586–603 (LRSKKLTWRIRTDTCLSV) are caM-binding. Residues 738–764 (DPPPPPFACARSSPTNSSESSQSLYEP) form a disordered region. Positions 749-764 (SSPTNSSESSQSLYEP) are enriched in low complexity.

The protein resides in the cell membrane. It carries out the reaction L-seryl-[protein] + ATP = O-phospho-L-seryl-[protein] + ADP + H(+). It catalyses the reaction L-threonyl-[protein] + ATP = O-phospho-L-threonyl-[protein] + ADP + H(+). This chain is G-type lectin S-receptor-like serine/threonine-protein kinase SD3-1 (SD31), found in Arabidopsis thaliana (Mouse-ear cress).